Consider the following 145-residue polypeptide: Large ribosomal subunit protein bL17 (145 aa).

Belongs to the bacterial ribosomal protein bL17 family. In terms of assembly, part of the 50S ribosomal subunit. Contacts protein L32.

This is Large ribosomal subunit protein bL17 from Francisella tularensis subsp. tularensis (strain FSC 198).